The chain runs to 378 residues: Putative glutamate--cysteine ligase 2 (378 aa).

Belongs to the glutamate--cysteine ligase type 2 family. YbdK subfamily.

It catalyses the reaction L-cysteine + L-glutamate + ATP = gamma-L-glutamyl-L-cysteine + ADP + phosphate + H(+). Functionally, ATP-dependent carboxylate-amine ligase which exhibits weak glutamate--cysteine ligase activity. This is Putative glutamate--cysteine ligase 2 from Pseudomonas paraeruginosa (strain DSM 24068 / PA7) (Pseudomonas aeruginosa (strain PA7)).